A 306-amino-acid chain; its full sequence is Protoheme IX farnesyltransferase (306 aa).

Helical transmembrane passes span 32 to 52 (VVAL…PGAL), 58 to 78 (IPAM…NHIV), 103 to 123 (NAIV…YALV), 126 to 146 (LTAF…TMYL), 153 to 173 (NITI…TAMT), 180 to 200 (ALLL…ALAI), 227 to 247 (ILLY…VGMS), 249 to 269 (WLYL…AWQL), and 278 to 298 (AMAT…ILLL).

This sequence belongs to the UbiA prenyltransferase family. Protoheme IX farnesyltransferase subfamily.

It localises to the cell inner membrane. The enzyme catalyses heme b + (2E,6E)-farnesyl diphosphate + H2O = Fe(II)-heme o + diphosphate. It functions in the pathway porphyrin-containing compound metabolism; heme O biosynthesis; heme O from protoheme: step 1/1. Converts heme B (protoheme IX) to heme O by substitution of the vinyl group on carbon 2 of heme B porphyrin ring with a hydroxyethyl farnesyl side group. The polypeptide is Protoheme IX farnesyltransferase (Colwellia psychrerythraea (strain 34H / ATCC BAA-681) (Vibrio psychroerythus)).